A 339-amino-acid chain; its full sequence is ADP,ATP carrier protein (339 aa).

Solcar repeat units follow at residues 39 to 133 (MAFV…IKGL), 145 to 234 (RFFV…AKGV), and 246 to 328 (AKWA…IKKF). 5 consecutive transmembrane segments (helical) span residues 41–70 (FVKDLLAGGTAGAISKTAVAPIERVKLLLQ), 110–134 (LANVVRYFPTQAFNFAFKDTIKGLF), 144–164 (WRFFVVNLASGGLAGAGSLLI), 212–232 (VSVQGIIVYRGAYFGLYDTAK), and 245–265 (FAKWAVAQAVTAGAGVLSYPF). 2 residues coordinate ADP: Arg115 and Lys127. Position 269 (Arg269) interacts with ADP. The important for transport activity stretch occupies residues 269–274 (RRRLMM). A Nucleotide carrier signature motif motif is present at residues 269–274 (RRRLMM). The chain crosses the membrane as a helical span at residues 305 to 322 (AWSNVLRGAGGAFVLVLY).

This sequence belongs to the mitochondrial carrier (TC 2.A.29) family. As to quaternary structure, monomer.

It is found in the mitochondrion inner membrane. It carries out the reaction ADP(in) + ATP(out) = ADP(out) + ATP(in). The matrix-open state (m-state) is inhibited by the membrane-permeable bongkrekic acid (BKA). The cytoplasmic-open state (c-state) is inhibited by the membrane-impermeable toxic inhibitor carboxyatractyloside (CATR). In terms of biological role, ADP:ATP antiporter that mediates import of ADP into the mitochondrial matrix for ATP synthesis, and export of ATP out to fuel the cell. Cycles between the cytoplasmic-open state (c-state) and the matrix-open state (m-state): operates by the alternating access mechanism with a single substrate-binding site intermittently exposed to either the cytosolic (c-state) or matrix (m-state) side of the inner mitochondrial membrane. The sequence is that of ADP,ATP carrier protein from Parachlorella kessleri (Green alga).